The primary structure comprises 447 residues: Ribosomal protein uS12 methylthiotransferase RimO (447 aa).

An MTTase N-terminal domain is found at 4–114; that stretch reads PKVGFVSLGC…VMEAVHEYVP (111 aa). Positions 13, 49, 78, 147, 151, and 154 each coordinate [4Fe-4S] cluster. In terms of domain architecture, Radical SAM core spans 133 to 370; the sequence is LTPKHYAYLK…MQVQQQISAA (238 aa). The 71-residue stretch at 373–443 folds into the TRAM domain; that stretch reads QKRIGQTMTV…EYDLFAKLIK (71 aa).

The protein belongs to the methylthiotransferase family. RimO subfamily. Requires [4Fe-4S] cluster as cofactor.

It is found in the cytoplasm. It carries out the reaction L-aspartate(89)-[ribosomal protein uS12]-hydrogen + (sulfur carrier)-SH + AH2 + 2 S-adenosyl-L-methionine = 3-methylsulfanyl-L-aspartate(89)-[ribosomal protein uS12]-hydrogen + (sulfur carrier)-H + 5'-deoxyadenosine + L-methionine + A + S-adenosyl-L-homocysteine + 2 H(+). Functionally, catalyzes the methylthiolation of an aspartic acid residue of ribosomal protein uS12. This is Ribosomal protein uS12 methylthiotransferase RimO from Acinetobacter baumannii (strain SDF).